Here is a 280-residue protein sequence, read N- to C-terminus: uncharacterized protein (280 aa).

Residues 1 to 21 form the signal peptide; that stretch reads MRPAIKVGLSTASVYPLRAEA.

To M.leprae ML2432 and S.coelicolor SCO3347.

This is an uncharacterized protein from Mycobacterium tuberculosis (strain CDC 1551 / Oshkosh).